Consider the following 147-residue polypeptide: Large ribosomal subunit protein uL15 (147 aa).

Residues 1–15 are compositionally biased toward basic residues; it reads MTDRVKKTRKLRGHV. The interval 1–34 is disordered; the sequence is MTDRVKKTRKLRGHVSHGYGRVGKHRKHSGGRGL.

This sequence belongs to the universal ribosomal protein uL15 family.

This Encephalitozoon cuniculi (strain GB-M1) (Microsporidian parasite) protein is Large ribosomal subunit protein uL15 (RPL27A).